The primary structure comprises 647 residues: MVSDGQVFPVPADLARDAHIDAAAYDAALARVEADPEGYWRDIAARLDWITPPTKIKDVSYAKEDFRIRWYEDGVLNVSANCIDRHLPAKKDDVALVFEGDEPGTSSTLTYGQLHEEVCRMANVLKAQGVKKGDRVTIYLPMVPLAAVAMLACARIGAVHSVVFGGFSPDSIAGRIQDCASHFVITADEGRRGGRRVPLKANIDEALKHCPWVGKVLMIRWTGADVPLKAGRDIVWQDVRDTVSADCPPEPMNAEDPLFILYTSGSTGKPKGVLHTTGGYLAWASWTFWAVFDYKPGEVFWCTADVGWVTGHSYVVYGPLANGGTSLIFEGVPNYPTPSRFWEVIDKHQVSIFYTAPTALRALMREGDAHVTKNDLSSLRLLGSVGEPINPEAWLWYHRVVGKEKLPIVDTWWQTETGGMLITPLPGATALKPGSASKPLPGVKPQLVDAEGKFLDGATEGNLVITDSWPGQMRTVYGDHQRFFETYFSTYPGKYFTGDGCRRDADGYYWITGRVDDVINVSGHRLGTAEIESALVAHETVAEAAVVGYPHDIKGQGVYAYVTLKAGIEATDALRKDLVLWVRHEIGPFAAPDVIQWAPGLPKTRSGKIMRRILRKIAENELGSLGDTSTLADPSVVDDLVKNRAGT.

CoA is bound by residues 192–195 (RGGR), Thr310, and Asn334. ATP contacts are provided by residues 386 to 388 (GEP), 410 to 415 (DTWWQT), Asp499, and Arg514. Position 522 (Ser522) interacts with CoA. Residue Arg525 participates in ATP binding. The Mg(2+) site is built by Val536, His538, and Val541. A CoA-binding site is contributed by Arg583. Lys608 carries the post-translational modification N6-acetyllysine.

This sequence belongs to the ATP-dependent AMP-binding enzyme family. Requires Mg(2+) as cofactor. Acetylated. Deacetylation by the SIR2-homolog deacetylase activates the enzyme.

It catalyses the reaction acetate + ATP + CoA = acetyl-CoA + AMP + diphosphate. In terms of biological role, catalyzes the conversion of acetate into acetyl-CoA (AcCoA), an essential intermediate at the junction of anabolic and catabolic pathways. AcsA undergoes a two-step reaction. In the first half reaction, AcsA combines acetate with ATP to form acetyl-adenylate (AcAMP) intermediate. In the second half reaction, it can then transfer the acetyl group from AcAMP to the sulfhydryl group of CoA, forming the product AcCoA. This chain is Acetyl-coenzyme A synthetase, found in Caulobacter vibrioides (strain ATCC 19089 / CIP 103742 / CB 15) (Caulobacter crescentus).